The following is a 282-amino-acid chain: Probable endonuclease 4 (282 aa).

Zn(2+)-binding residues include H70, H110, E146, D180, H183, H217, D230, H232, and E262.

Belongs to the AP endonuclease 2 family. Zn(2+) serves as cofactor.

The catalysed reaction is Endonucleolytic cleavage to 5'-phosphooligonucleotide end-products.. In terms of biological role, endonuclease IV plays a role in DNA repair. It cleaves phosphodiester bonds at apurinic or apyrimidinic (AP) sites, generating a 3'-hydroxyl group and a 5'-terminal sugar phosphate. The chain is Probable endonuclease 4 from Wolinella succinogenes (strain ATCC 29543 / DSM 1740 / CCUG 13145 / JCM 31913 / LMG 7466 / NCTC 11488 / FDC 602W) (Vibrio succinogenes).